Reading from the N-terminus, the 489-residue chain is 5'-AMP-activated protein kinase subunit gamma-3 (489 aa).

A disordered region spans residues 1-95 (MEPELEHTLP…TRQEATFPKA (95 aa)). Positions 32-47 (GENSWPSPAVATSSER) are enriched in polar residues. CBS domains lie at 197–258 (MATS…RSPL), 280–340 (CFKP…LLPR), and 355–415 (TFRD…HLDM). ADP-binding positions include R225, 240–245 (MLTITD), V285, 306–307 (HR), and K325. AMP-binding positions include R225, 240–245 (MLTITD), V285, H306, 306–307 (HR), K325, T355, A360, 381–382 (SA), 397–400 (SRFD), R424, L432, H453, 453–454 (HR), and 469–472 (SLSD). ATP contacts are provided by residues R225, 240–245 (MLTITD), V285, 306–307 (HR), R307, and K325. The short motif at 293 to 314 (LFEAVYALIKNRIHRLPVLDPV) is the AMPK pseudosubstrate element. Residues 397-400 (SRFD), R424, L432, and 453-454 (HR) contribute to the ADP site. ATP contacts are provided by residues 397 to 400 (SRFD), R424, L432, and 453 to 454 (HR). The 60-residue stretch at 427-486 (CLEGVLSCQPHESLGEVIDRIAREQVHRLVLVDETQHLLGVVSLSDILQALVLSPAGIDA) folds into the CBS 4 domain.

This sequence belongs to the 5'-AMP-activated protein kinase gamma subunit family. In terms of assembly, AMPK is a heterotrimer of an alpha catalytic subunit (PRKAA1 or PRKAA2), a beta (PRKAB1 or PRKAB2) and a gamma non-catalytic subunits (PRKAG1, PRKAG2 or PRKAG3). Interacts with FNIP1 and FNIP2. Phosphorylated by ULK1; leading to negatively regulate AMPK activity and suggesting the existence of a regulatory feedback loop between ULK1 and AMPK. In terms of processing, glycosylated; O-GlcNAcylated by OGT, promoting the AMP-activated protein kinase (AMPK) activity.

AMP/ATP-binding subunit of AMP-activated protein kinase (AMPK), an energy sensor protein kinase that plays a key role in regulating cellular energy metabolism. In response to reduction of intracellular ATP levels, AMPK activates energy-producing pathways and inhibits energy-consuming processes: inhibits protein, carbohydrate and lipid biosynthesis, as well as cell growth and proliferation. AMPK acts via direct phosphorylation of metabolic enzymes, and by longer-term effects via phosphorylation of transcription regulators. AMPK also acts as a regulator of cellular polarity by remodeling the actin cytoskeleton; probably by indirectly activating myosin. The AMPK gamma3 subunit is a non-catalytic subunit with a regulatory role in muscle energy metabolism. It mediates binding to AMP, ADP and ATP, leading to AMPK activation or inhibition: AMP-binding results in allosteric activation of alpha catalytic subunit (PRKAA1 or PRKAA2) both by inducing phosphorylation and preventing dephosphorylation of catalytic subunits. ADP also stimulates phosphorylation, without stimulating already phosphorylated catalytic subunit. ATP promotes dephosphorylation of catalytic subunit, rendering the AMPK enzyme inactive. The polypeptide is 5'-AMP-activated protein kinase subunit gamma-3 (Prkag3) (Mus musculus (Mouse)).